We begin with the raw amino-acid sequence, 363 residues long: Histone-lysine N-methyltransferase ASHH3 (363 aa).

The AWS domain occupies 63 to 114; the sequence is DDGIFCSCSSSSPGSSSTVCGSNCHCGMLFSSCSSSCKCGSECNNKPFQQRH. Positions 116 to 233 constitute an SET domain; the sequence is KKMKLIQTEK…KGEHLTYDYQ (118 aa). The Post-SET domain maps to 239 to 255; sequence ADQDCHCGAVGCRRKLG.

This sequence belongs to the class V-like SAM-binding methyltransferase superfamily. Histone-lysine methyltransferase family. SET2 subfamily.

The protein localises to the nucleus. It localises to the chromosome. The protein resides in the centromere. The enzyme catalyses L-lysyl-[histone] + S-adenosyl-L-methionine = N(6)-methyl-L-lysyl-[histone] + S-adenosyl-L-homocysteine + H(+). Its function is as follows. Histone methyltransferase. The chain is Histone-lysine N-methyltransferase ASHH3 (ASHH3) from Arabidopsis thaliana (Mouse-ear cress).